The sequence spans 391 residues: MLDWYISVSFGELTLKGKNRHTFEKRAISKILDAISDYKIEEYYQEQGKLYIKADVNDFDEIIDHIKKVFGIVYISPCVKCEKTVESMQDGVLKIIEGKIIKDKLQTFKVDVHRVDKRFEPKSPELNPLLGGTILKKYGNYVKVDIKNPDFFIYVDIKDNCYVYTDRIKGWGGLPIGSSGRGLLLLSGGIDSPVAAFLMAKRGVRVDCLHFHSYPFTSQRGFEKVKQLAEEVSYYTGNINFYSVNLLPVYKAITKNCKERMMTIISRRFMMRIAERIANENKIDALITGESLGQVASQTIQGVSVINEVTSLPILRPLIASDKTEIIEIAREIGTYETSILPFEDCCTVFTPKRPVTKPRIYDVKREEENLDIEALVQECIDNMELIKIRQ.

In terms of domain architecture, THUMP spans 60-167 (DEIIDHIKKV…KDNCYVYTDR (108 aa)). Residues 185 to 186 (LL), 210 to 211 (HF), Arg267, Gly289, and Gln298 each bind ATP.

The protein belongs to the ThiI family.

It localises to the cytoplasm. The enzyme catalyses [ThiI sulfur-carrier protein]-S-sulfanyl-L-cysteine + a uridine in tRNA + 2 reduced [2Fe-2S]-[ferredoxin] + ATP + H(+) = [ThiI sulfur-carrier protein]-L-cysteine + a 4-thiouridine in tRNA + 2 oxidized [2Fe-2S]-[ferredoxin] + AMP + diphosphate. It catalyses the reaction [ThiS sulfur-carrier protein]-C-terminal Gly-Gly-AMP + S-sulfanyl-L-cysteinyl-[cysteine desulfurase] + AH2 = [ThiS sulfur-carrier protein]-C-terminal-Gly-aminoethanethioate + L-cysteinyl-[cysteine desulfurase] + A + AMP + 2 H(+). It participates in cofactor biosynthesis; thiamine diphosphate biosynthesis. In terms of biological role, catalyzes the ATP-dependent transfer of a sulfur to tRNA to produce 4-thiouridine in position 8 of tRNAs, which functions as a near-UV photosensor. Also catalyzes the transfer of sulfur to the sulfur carrier protein ThiS, forming ThiS-thiocarboxylate. This is a step in the synthesis of thiazole, in the thiamine biosynthesis pathway. The sulfur is donated as persulfide by IscS. In Finegoldia magna (strain ATCC 29328 / DSM 20472 / WAL 2508) (Peptostreptococcus magnus), this protein is Probable tRNA sulfurtransferase.